Consider the following 311-residue polypeptide: Chemotaxis protein CheV3 (311 aa).

Residues 13 to 164 (EIELVDFRIY…LESILDDLKL (152 aa)) form the CheW-like domain. Residues 182–308 (EVLFLDDSKT…FTEEISKILD (127 aa)) form the Response regulatory domain. At Asp241 the chain carries 4-aspartylphosphate.

Its function is as follows. Plays a role in chemotaxis signal transduction system in order to colonize the host stomach. May act as a phosphate sink to control the flow of phosphate to CheAY. The sequence is that of Chemotaxis protein CheV3 from Helicobacter pylori (strain ATCC 700392 / 26695) (Campylobacter pylori).